A 232-amino-acid chain; its full sequence is Thiamine import ATP-binding protein ThiQ (232 aa).

Residues 2–230 (LKLTDITWLY…KASASALLGI (229 aa)) enclose the ABC transporter domain. 32-39 (GPSGAGKS) contacts ATP.

It belongs to the ABC transporter superfamily. Thiamine importer (TC 3.A.1.19.1) family. In terms of assembly, the complex is composed of two ATP-binding proteins (ThiQ), two transmembrane proteins (ThiP) and a solute-binding protein (ThiB).

It localises to the cell inner membrane. It catalyses the reaction thiamine(out) + ATP + H2O = thiamine(in) + ADP + phosphate + H(+). Its function is as follows. Part of the ABC transporter complex ThiBPQ involved in thiamine import. Responsible for energy coupling to the transport system. The protein is Thiamine import ATP-binding protein ThiQ of Escherichia coli (strain K12).